We begin with the raw amino-acid sequence, 208 residues long: Protein-L-isoaspartate O-methyltransferase (208 aa).

Serine 59 is a catalytic residue.

Belongs to the methyltransferase superfamily. L-isoaspartyl/D-aspartyl protein methyltransferase family.

The protein resides in the cytoplasm. It catalyses the reaction [protein]-L-isoaspartate + S-adenosyl-L-methionine = [protein]-L-isoaspartate alpha-methyl ester + S-adenosyl-L-homocysteine. Catalyzes the methyl esterification of L-isoaspartyl residues in peptides and proteins that result from spontaneous decomposition of normal L-aspartyl and L-asparaginyl residues. It plays a role in the repair and/or degradation of damaged proteins. In Vibrio cholerae serotype O1 (strain ATCC 39541 / Classical Ogawa 395 / O395), this protein is Protein-L-isoaspartate O-methyltransferase.